The chain runs to 868 residues: B-cell receptor CD22 (868 aa).

The N-terminal stretch at 1 to 21 (MRVHYLWLLLILGHVASARYS) is a signal peptide. Positions 22-148 (SANDWTVDHP…MEPIHLNVSE (127 aa)) constitute an Ig-like V-type domain. The Extracellular portion of the chain corresponds to 22 to 708 (SANDWTVDHP…YYSPETIGKR (687 aa)). 3 disulfides stabilise this stretch: Cys-41/Cys-177, Cys-46/Cys-112, and Cys-171/Cys-235. N-linked (GlcNAc...) asparagine glycosylation is found at Asn-111 and Asn-122. Position 130 (Arg-130) interacts with N-acetylneuraminate. Asn-145, Asn-174, Asn-271, Asn-281, Asn-384, Asn-414, Asn-466, Asn-567, and Asn-595 each carry an N-linked (GlcNAc...) asparagine glycan. 6 consecutive Ig-like C2-type domains span residues 153-250 (PYIQ…RTVR), 257-347 (PKLE…VELT), 352-435 (PEPS…AKLD), 440-521 (PKAV…VILN), 526-603 (PRDV…ETLS), and 614-697 (PRRL…STLT). Intrachain disulfides connect Cys-278–Cys-330, Cys-374–Cys-417, Cys-463–Cys-505, and Cys-550–Cys-592. Residues Cys-637 and Cys-680 are joined by a disulfide bond. Residues 709–727 (VALGLGFCLTICILAIWGM) form a helical membrane-spanning segment. The Cytoplasmic segment spans residues 728 to 868 (KIQKKWKQNR…EDVDYVTLKH (141 aa)). Residues 738 to 752 (SQQGLQENSSGQSFF) show a composition bias toward polar residues. The tract at residues 738–772 (SQQGLQENSSGQSFFVRNKKARRTPLSEGPQSQGC) is disordered. 3 positions are modified to phosphoserine: Ser-746, Ser-747, and Ser-750. The short motif at 781-786 (VSYAIL) is the ITIM motif 1 element. Tyr-783 is modified (phosphotyrosine). Residues 790–812 (ESDTHNTGDAGTPATQAPPPNNS) are disordered. Tyr-828, Tyr-843, and Tyr-863 each carry phosphotyrosine. Short sequence motifs (ITIM motif) lie at residues 841 to 846 (IHYSEL) and 861 to 866 (VDYVTL).

The protein belongs to the immunoglobulin superfamily. SIGLEC (sialic acid binding Ig-like lectin) family. In terms of assembly, predominantly monomer of isoform CD22-beta. Also found as heterodimer of isoform CD22-beta and a shorter isoform. Interacts with PTPN6/SHP-1, LYN, SYK, PIK3R1/PIK3R2 and PLCG1 upon phosphorylation. Interacts with GRB2, INPP5D and SHC1 upon phosphorylation. May form a complex with INPP5D/SHIP, GRB2 and SHC1. In terms of processing, phosphorylated on tyrosine residues by LYN. Post-translationally, phosphorylation of Tyr-783 and Tyr-843 are involved in binding to SYK. Phosphorylation of Tyr-828 is involved in binding to GRB2. Phosphorylation of Tyr-863 is involved in binding to SYK, PLCG2 and PIK3R1/PIK3R2. As to expression, B-lymphocytes.

The protein localises to the cell membrane. Functionally, most highly expressed siglec (sialic acid-binding immunoglobulin-like lectin) on B-cells that plays a role in various aspects of B-cell biology including differentiation, antigen presentation, and trafficking to bone marrow. Binds to alpha 2,6-linked sialic acid residues of surface molecules such as CD22 itself, CD45 and IgM in a cis configuration. Can also bind to ligands on other cells as an adhesion molecule in a trans configuration. Acts as an inhibitory coreceptor on the surface of B-cells and inhibits B-cell receptor induced signaling, characterized by inhibition of the calcium mobilization and cellular activation. Mechanistically, the immunoreceptor tyrosine-based inhibitory motif domain is phosphorylated by the Src kinase LYN, which in turn leads to the recruitment of the protein tyrosine phosphatase 1/PTPN6, leading to the negative regulation of BCR signaling. If this negative signaling from is of sufficient strength, apoptosis of the B-cell can be induced. This Mus musculus (Mouse) protein is B-cell receptor CD22.